Reading from the N-terminus, the 574-residue chain is Protein misato (574 aa).

This sequence belongs to the misato family.

Its subcellular location is the mitochondrion. This is Protein misato (mst) from Drosophila melanogaster (Fruit fly).